The primary structure comprises 126 residues: Histone H2B 7 (126 aa).

The span at M1–K12 shows a compositional bias: low complexity. The segment at M1–K35 is disordered. N6-acetyllysine is present on residues K6 and K13. Residues K13–R34 are compositionally biased toward basic residues. S15 carries the phosphoserine modification. N6-acetyllysine occurs at positions 16 and 21. O-linked (GlcNAc) serine glycosylation occurs at S113. K121 participates in a covalent cross-link: Glycyl lysine isopeptide (Lys-Gly) (interchain with G-Cter in ubiquitin).

This sequence belongs to the histone H2B family. As to quaternary structure, the nucleosome is a histone octamer containing two molecules each of H2A, H2B, H3 and H4 assembled in one H3-H4 heterotetramer and two H2A-H2B heterodimers. The octamer wraps approximately 147 bp of DNA. Post-translationally, monoubiquitination of Lys-121 by the BRE1 gives a specific tag for epigenetic transcriptional activation and is also prerequisite for histone H3 'Lys-4' and 'Lys-79' methylation. In terms of processing, phosphorylated on Ser-15 during apoptosis; which facilitates apoptotic chromatin condensation. GlcNAcylation at Ser-113 promotes monoubiquitination of Lys-121. It fluctuates in response to extracellular glucose, and associates with transcribed genes.

The protein localises to the nucleus. It localises to the chromosome. Functionally, core component of nucleosome. Nucleosomes wrap and compact DNA into chromatin, limiting DNA accessibility to the cellular machineries which require DNA as a template. Histones thereby play a central role in transcription regulation, DNA repair, DNA replication and chromosomal stability. DNA accessibility is regulated via a complex set of post-translational modifications of histones, also called histone code, and nucleosome remodeling. This Gallus gallus (Chicken) protein is Histone H2B 7 (H2B-VII).